Here is a 704-residue protein sequence, read N- to C-terminus: UvrABC system protein C (704 aa).

A disordered region spans residues 1–77 (MIHDPAEPPA…PAQAGAGPMA (77 aa)). A compositionally biased stretch (acidic residues) spans 49-66 (VEEDDEARLPEVEDEPEA). The segment covering 67–77 (EPAQAGAGPMA) has biased composition (low complexity). Residues 92-170 (TSPGVYRMLN…IKQLRPRFNV (79 aa)) form the GIY-YIG domain. Residues 280 to 315 (RAVKELLAAEMEKASGELEFETAALYRDRLAALSAI) form the UVR domain.

Belongs to the UvrC family. In terms of assembly, interacts with UvrB in an incision complex.

The protein localises to the cytoplasm. The UvrABC repair system catalyzes the recognition and processing of DNA lesions. UvrC both incises the 5' and 3' sides of the lesion. The N-terminal half is responsible for the 3' incision and the C-terminal half is responsible for the 5' incision. This Rhodopseudomonas palustris (strain ATCC BAA-98 / CGA009) protein is UvrABC system protein C.